The chain runs to 233 residues: Orotidine 5'-phosphate decarboxylase (233 aa).

Substrate contacts are provided by residues Asp12, Lys34, 61–70, Thr116, Arg181, Gln190, Gly210, and Arg211; that span reads DWKLHDIGAT. Lys63 serves as the catalytic Proton donor.

It belongs to the OMP decarboxylase family. Type 1 subfamily. In terms of assembly, homodimer.

The enzyme catalyses orotidine 5'-phosphate + H(+) = UMP + CO2. Its pathway is pyrimidine metabolism; UMP biosynthesis via de novo pathway; UMP from orotate: step 2/2. Functionally, catalyzes the decarboxylation of orotidine 5'-monophosphate (OMP) to uridine 5'-monophosphate (UMP). This is Orotidine 5'-phosphate decarboxylase from Caulobacter vibrioides (strain ATCC 19089 / CIP 103742 / CB 15) (Caulobacter crescentus).